A 295-amino-acid chain; its full sequence is Accessory protein VasW (295 aa).

Functionally, plays an accessory role in VasX-mediated bacterial killing. In Vibrio cholerae serotype O1 (strain ATCC 39315 / El Tor Inaba N16961), this protein is Accessory protein VasW.